A 947-amino-acid chain; its full sequence is Beta-glucosidase (947 aa).

The active site involves aspartate 696.

Belongs to the glycosyl hydrolase 3 family.

The catalysed reaction is Hydrolysis of terminal, non-reducing beta-D-glucosyl residues with release of beta-D-glucose.. It functions in the pathway glycan metabolism; cellulose degradation. The chain is Beta-glucosidase from Ruminococcus albus.